We begin with the raw amino-acid sequence, 236 residues long: Calcium-binding lectin RapA2 (236 aa).

It is found in the secreted. Interacts specifically in a calcium-dependent manner with the acidic exopolysaccharide (EPS) and capsular polysaccharide produced by R.leguminosarum. Could be involved in the development of the biofilm matrix made of EPS. The polypeptide is Calcium-binding lectin RapA2 (Rhizobium johnstonii (strain DSM 114642 / LMG 32736 / 3841) (Rhizobium leguminosarum bv. viciae)).